The chain runs to 114 residues: Large ribosomal subunit protein bL20 (114 aa).

Belongs to the bacterial ribosomal protein bL20 family.

In terms of biological role, binds directly to 23S ribosomal RNA and is necessary for the in vitro assembly process of the 50S ribosomal subunit. It is not involved in the protein synthesizing functions of that subunit. This Flavobacterium psychrophilum (strain ATCC 49511 / DSM 21280 / CIP 103535 / JIP02/86) protein is Large ribosomal subunit protein bL20.